The following is a 365-amino-acid chain: NAC domain-containing protein 43 (365 aa).

Positions 16–180 (VPPGFRFHPT…GWVVCRIFKK (165 aa)) constitute an NAC domain. The DNA-binding element occupies 116 to 186 (IGMRKTLVFY…IFKKKNLHKT (71 aa)).

In terms of tissue distribution, expressed in various aboveground tissues undergoing thickening of the lignified secondary wall such as anthers, filaments of stamens, the base of carpels, styles, the boundaries between siliques and pedicels, the midrib of leaf veins, and inflorescence stems, specifically in interfascicular fibers (sclerenchyma), cells differentiating into vascular vessels, and xylary fibers (secondary xylem).

It is found in the nucleus. Transcription activator of genes involved in biosynthesis of secondary walls. Together with NST2 and NST3, required for the secondary cell wall thickening of sclerenchymatous fibers, secondary xylem (tracheary elements), and of the anther endocethium, which is necessary for anther dehiscence. May also regulate the secondary cell wall lignification of other tissues. The chain is NAC domain-containing protein 43 (NAC043) from Arabidopsis thaliana (Mouse-ear cress).